The following is a 117-amino-acid chain: Chondroitin proteoglycan 7 (117 aa).

The first 19 residues, 1-19 (MQTITLLALLACIAVPIFA), serve as a signal peptide directing secretion. The disordered stretch occupies residues 31–97 (VEASGEGSGE…SGENLSNGIV (67 aa)). Composition is skewed to low complexity over residues 32 to 41 (EASGEGSGES) and 48 to 57 (ESSGEGSGES). O-linked (Xyl...) (chondroitin sulfate) serine glycans are attached at residues serine 66, serine 70, serine 74, serine 84, and serine 88. Positions 75 to 95 (GASDAVLESSGEGSGENLSNG) are enriched in low complexity. Residue asparagine 91 is glycosylated (N-linked (GlcNAc...) asparagine).

This Caenorhabditis briggsae protein is Chondroitin proteoglycan 7 (cpg-7).